The sequence spans 418 residues: Equilibrative nucleotide transporter 4 (418 aa).

11 helical membrane-spanning segments follow: residues 20-40, 54-74, 85-105, 108-128, 147-169, 186-206, 264-284, 291-311, 326-346, 353-373, and 392-412; these read MVVCCILGIGSLFSWNSMLTI, SRVFTLIYQPIALGTIMILAY, ILTGYILFTISTFLLIVLDLT, GHGGIGHYIVLCTIVASFGLA, LIQSYMAGSGMAGALTSVLRLIT, IFLAISTFIELLCVILYAYVF, HAVNLFLIYVLTLSIFPGFLY, GLGDWYALILVATYNFWDLFG, KALTIAVLTRYFLVPAFYFTA, WMIMLVSILGLTTGHLTVCIM, and LVVFILGGAVVGISLGWLWLI.

It belongs to the SLC29A/ENT transporter (TC 2.A.57) family. As to expression, expressed in leaves and at lowe levels in stems and flowers.

Its subcellular location is the cell membrane. Its function is as follows. Nucleoside transporter that can mediate uptake of adenosine, uridine, guanosine or cytidine when expressed in a heterologous system (yeast). In Arabidopsis thaliana (Mouse-ear cress), this protein is Equilibrative nucleotide transporter 4 (ENT4).